We begin with the raw amino-acid sequence, 188 residues long: dCTP deaminase (188 aa).

Residues 111–116 (KSTYAR), 135–137 (TLE), Q156, Y170, and Q180 each bind dCTP. Catalysis depends on E137, which acts as the Proton donor/acceptor.

Belongs to the dCTP deaminase family. In terms of assembly, homotrimer.

The enzyme catalyses dCTP + H2O + H(+) = dUTP + NH4(+). It functions in the pathway pyrimidine metabolism; dUMP biosynthesis; dUMP from dCTP (dUTP route): step 1/2. In terms of biological role, catalyzes the deamination of dCTP to dUTP. The sequence is that of dCTP deaminase from Laribacter hongkongensis (strain HLHK9).